Consider the following 397-residue polypeptide: Succinate--CoA ligase [ADP-forming] subunit beta (397 aa).

The ATP-grasp domain occupies K9–A254. ATP is bound by residues K46, G53 to G55, E109, S112, and E117. The Mg(2+) site is built by N209 and D223. Substrate is bound by residues N274 and G331 to M333.

This sequence belongs to the succinate/malate CoA ligase beta subunit family. As to quaternary structure, heterotetramer of two alpha and two beta subunits. The cofactor is Mg(2+).

It catalyses the reaction succinate + ATP + CoA = succinyl-CoA + ADP + phosphate. It carries out the reaction GTP + succinate + CoA = succinyl-CoA + GDP + phosphate. It functions in the pathway carbohydrate metabolism; tricarboxylic acid cycle; succinate from succinyl-CoA (ligase route): step 1/1. Succinyl-CoA synthetase functions in the citric acid cycle (TCA), coupling the hydrolysis of succinyl-CoA to the synthesis of either ATP or GTP and thus represents the only step of substrate-level phosphorylation in the TCA. The beta subunit provides nucleotide specificity of the enzyme and binds the substrate succinate, while the binding sites for coenzyme A and phosphate are found in the alpha subunit. This is Succinate--CoA ligase [ADP-forming] subunit beta from Cereibacter sphaeroides (strain ATCC 17029 / ATH 2.4.9) (Rhodobacter sphaeroides).